We begin with the raw amino-acid sequence, 664 residues long: Intraflagellar transport protein 70A1 (664 aa).

TPR repeat units follow at residues 11–44 (DGEF…SSRS), 45–78 (RAGL…HPEL), 153–186 (PDGL…SGYQ), 188–220 (DLSY…GIRQ), 393–423 (TKQV…EKYI), 424–456 (PVLM…CNDH), and 458–491 (VWKL…NYDN). Positions 507–534 (YIMTSQNEEAEELMRKIEKEEEQLSYGD) form a coiled coil. A TPR 8 repeat occupies 543–576 (CIVNLVIGTLYCAKGNYDFGISRVIKSLEPYHKK).

This sequence belongs to the TTC30/dfy-1/fleer family. In terms of assembly, interacts wit the IFT B complex component IFT52.

It localises to the cell projection. The protein resides in the cilium. Its function is as follows. Required for polyglutamylation of axonemal tubulin. Plays a role in anterograde intraflagellar transport (IFT), the process by which cilia precursors are transported from the base of the cilium to the site of their incorporation at the tip. The sequence is that of Intraflagellar transport protein 70A1 (Ift70a1) from Mus musculus (Mouse).